We begin with the raw amino-acid sequence, 845 residues long: Meiotically up-regulated gene 4 protein (845 aa).

Residues 122–158 (LSTTDEQPKEPSIISISSSSSDPSSSPPPSSSLLKTP) form a disordered region. Residues 132-145 (PSIISISSSSSDPS) show a composition bias toward low complexity. The chain crosses the membrane as a helical span at residues 726 to 746 (FLVFLTFTGMTLFILYQLTFP).

Its subcellular location is the membrane. Functionally, has a role in meiosis. This chain is Meiotically up-regulated gene 4 protein (mug4), found in Schizosaccharomyces pombe (strain 972 / ATCC 24843) (Fission yeast).